We begin with the raw amino-acid sequence, 660 residues long: DNA ligase (660 aa).

NAD(+) is bound by residues 33-37 (DFVYD), 82-83 (SL), and Glu110. Residue Lys112 is the N6-AMP-lysine intermediate of the active site. NAD(+) is bound by residues Arg133, Glu167, Lys281, and Lys305. Residues Cys396, Cys399, Cys412, and Cys417 each contribute to the Zn(2+) site. Residues 583–660 (GENKLLAGKK…SFEDIKSYLD (78 aa)) enclose the BRCT domain.

The protein belongs to the NAD-dependent DNA ligase family. LigA subfamily. Mg(2+) is required as a cofactor. It depends on Mn(2+) as a cofactor.

It carries out the reaction NAD(+) + (deoxyribonucleotide)n-3'-hydroxyl + 5'-phospho-(deoxyribonucleotide)m = (deoxyribonucleotide)n+m + AMP + beta-nicotinamide D-nucleotide.. DNA ligase that catalyzes the formation of phosphodiester linkages between 5'-phosphoryl and 3'-hydroxyl groups in double-stranded DNA using NAD as a coenzyme and as the energy source for the reaction. It is essential for DNA replication and repair of damaged DNA. The polypeptide is DNA ligase (Borreliella burgdorferi (strain ZS7) (Borrelia burgdorferi)).